Consider the following 176-residue polypeptide: Small ribosomal subunit protein uS5 (176 aa).

Positions 11-74 (LSEVLVDVNR…QAAKKRMMKV (64 aa)) constitute an S5 DRBM domain.

The protein belongs to the universal ribosomal protein uS5 family. As to quaternary structure, part of the 30S ribosomal subunit. Contacts proteins S4 and S8.

With S4 and S12 plays an important role in translational accuracy. Functionally, located at the back of the 30S subunit body where it stabilizes the conformation of the head with respect to the body. The protein is Small ribosomal subunit protein uS5 of Rickettsia rickettsii (strain Iowa).